The sequence spans 163 residues: Transcriptional repressor NrdR (163 aa).

Residues 3–34 (CPFCAYADTRVVDSRLADDGGSVRRRRECPQC) fold into a zinc finger. The 91-residue stretch at 49–139 (PVVVKTDGRR…VYRRFEDVDA (91 aa)) folds into the ATP-cone domain.

Belongs to the NrdR family. Zn(2+) serves as cofactor.

Its function is as follows. Negatively regulates transcription of bacterial ribonucleotide reductase nrd genes and operons by binding to NrdR-boxes. This is Transcriptional repressor NrdR from Acidithiobacillus ferrooxidans (strain ATCC 23270 / DSM 14882 / CIP 104768 / NCIMB 8455) (Ferrobacillus ferrooxidans (strain ATCC 23270)).